Consider the following 959-residue polypeptide: Bifunctional premutilin synthase (959 aa).

A class II diterpene cyclase region spans residues 1–542 (MGLSEDLHAR…ALNVPIPRFD (542 aa)). Residues 309–312 (DADM) carry the DXDD motif motif. Asp311 functions as the For class II diterpene cyclase activity in the catalytic mechanism. Positions 543-959 (PSSISTLPAI…TANGSNGIHH (417 aa)) are class I diterpene synthase. Asp649 acts as the For class I diterpene synthase activity in catalysis. Residues Asp649, Asp653, and Asn824 each contribute to the Mg(2+) site. A DDXXD motif motif is present at residues 649 to 653 (DDYLD). The disordered stretch occupies residues 931–959 (KGTNGVKKINGSSTNGTKVTANGSNGIHH). Polar residues predominate over residues 940-959 (NGSSTNGTKVTANGSNGIHH).

This sequence belongs to the terpene synthase family. It depends on Mg(2+) as a cofactor.

Its pathway is secondary metabolite biosynthesis; terpenoid biosynthesis. Bifunctional premutilin synthase; part of the gene cluster that mediates the biosynthesis of pleuromutilin, a tricyclic diterpene showing antibacterial properties. The geranylgeranyl diphosphate (GGPP) synthase catalyzes the first step in pleuromutilin biosynthesis. GGPP is then substrate of the premutilin synthase (PS) to yield premutilin. Premutilin synthase is a bifunctional enzyme composed of the fusion of a class II diterpene cyclase (DTC) and a class I diterpene synthase (DTS), with the corresponding domains and active sites containing characteristic aspartate-rich motifs. GGPP is first converted to mutildienyl-diphosphate (MPP) at the class II DTC site. MPP is subsequently further cyclized at the class I DTS site, followed by a 1,5-hydride shift and addition of water prior to terminating deprotonation, to yield premutilin. In addition to the aforementioned GGPP synthase and bifunctional diterpene synthase, the cluster also contains three cytochrome P450 monooxygenases, a short-chain alcohol dehydrogenase, and an acyltransferase, involved in the conversion of premutilin to pleuromutilin. The cytochrome P450 monooxygenases P450-1 and P450-2 hydroxylate premutilin at C-11 and C-3, respectively, producing 11-hydroxypremutilin and 3-hydroxypremutilin. The combination of the actions of both ple5 and ple6 leads to the production of 3,11-dihydroxypremutilin. The short chain dehydrogenase SDR further converts 3,11-dihydroxypremutilin into mutilin. The acetyltransferase ATF then acetylates mutilin to produce 14-O-acetylmutilin. Finally, the cytochrome P450 monooxygenase P450-3 catalyzes hydroxylation on the alpha position of the acetyl side chain of 14-O-acetylmutilin to yield pleuromutilin. The protein is Bifunctional premutilin synthase of Clitopilus passeckerianus (Pleurotus passeckerianus).